The following is a 263-amino-acid chain: Small ribosomal subunit protein uS2 (263 aa).

Over residues Gly230–Leu249 the composition is skewed to basic and acidic residues. The segment at Gly230–Glu263 is disordered. The segment covering Asp250–Glu263 has biased composition (acidic residues).

The protein belongs to the universal ribosomal protein uS2 family.

This Campylobacter jejuni subsp. jejuni serotype O:2 (strain ATCC 700819 / NCTC 11168) protein is Small ribosomal subunit protein uS2.